The sequence spans 379 residues: 23S rRNA (uracil(747)-C(5))-methyltransferase RlmC (379 aa).

4 residues coordinate [4Fe-4S] cluster: C3, C11, C14, and C86. Positions 211, 240, 262, and 310 each coordinate S-adenosyl-L-methionine. The active-site Nucleophile is the C337.

It belongs to the class I-like SAM-binding methyltransferase superfamily. RNA M5U methyltransferase family. RlmC subfamily.

The catalysed reaction is uridine(747) in 23S rRNA + S-adenosyl-L-methionine = 5-methyluridine(747) in 23S rRNA + S-adenosyl-L-homocysteine + H(+). Catalyzes the formation of 5-methyl-uridine at position 747 (m5U747) in 23S rRNA. This chain is 23S rRNA (uracil(747)-C(5))-methyltransferase RlmC, found in Halothiobacillus neapolitanus (strain ATCC 23641 / c2) (Thiobacillus neapolitanus).